The primary structure comprises 311 residues: Probable cell division protein WhiA (311 aa).

Positions 274–307 (SLKELGSLLTPPLTKSGVNHRFRKLELIAEKIRN) form a DNA-binding region, H-T-H motif.

It belongs to the WhiA family.

In terms of biological role, involved in cell division and chromosome segregation. In Carboxydothermus hydrogenoformans (strain ATCC BAA-161 / DSM 6008 / Z-2901), this protein is Probable cell division protein WhiA.